The following is a 137-amino-acid chain: NADH dehydrogenase [ubiquinone] 1 beta subcomplex subunit 7 (137 aa).

Residue G2 is the site of N-myristoyl glycine attachment. Residues 56–98 (RDYCAHHLIRLLKCKRDSFPNFLACKQERHDWDYCEHRDYVMR) form the CHCH domain. The Cx9C motif 1 signature appears at 59 to 69 (CAHHLIRLLKC). Disulfide bonds link C59–C90 and C69–C80. S73 is modified (phosphoserine). Positions 80–90 (CKQERHDWDYC) match the Cx9C motif 2 motif. The interval 113–137 (KRREKKAAELAKGQGPGEVDPKVAL) is disordered.

Belongs to the complex I NDUFB7 subunit family. In terms of assembly, complex I is composed of 45 different subunits.

It is found in the mitochondrion inner membrane. The protein resides in the mitochondrion intermembrane space. Functionally, accessory subunit of the mitochondrial membrane respiratory chain NADH dehydrogenase (Complex I), that is believed not to be involved in catalysis. Complex I functions in the transfer of electrons from NADH to the respiratory chain. The immediate electron acceptor for the enzyme is believed to be ubiquinone. The polypeptide is NADH dehydrogenase [ubiquinone] 1 beta subcomplex subunit 7 (NDUFB7) (Homo sapiens (Human)).